A 569-amino-acid polypeptide reads, in one-letter code: uncharacterized protein (569 aa).

A helical membrane pass occupies residues 2–22 (VVIAALLGSLAVLAFLFYLWY).

It localises to the membrane. This is an uncharacterized protein from Mycoplasma pneumoniae (strain ATCC 29342 / M129 / Subtype 1) (Mycoplasmoides pneumoniae).